The chain runs to 340 residues: tRNA-dihydrouridine(20/20a) synthase (340 aa).

FMN-binding positions include Pro22–Met24 and Gln75. Catalysis depends on Cys105, which acts as the Proton donor. Residues Lys144, His177, Asn217 to Gly219, and Gly239 to Arg240 contribute to the FMN site.

This sequence belongs to the Dus family. DusA subfamily. It depends on FMN as a cofactor.

The catalysed reaction is 5,6-dihydrouridine(20) in tRNA + NADP(+) = uridine(20) in tRNA + NADPH + H(+). It carries out the reaction 5,6-dihydrouridine(20) in tRNA + NAD(+) = uridine(20) in tRNA + NADH + H(+). It catalyses the reaction 5,6-dihydrouridine(20a) in tRNA + NADP(+) = uridine(20a) in tRNA + NADPH + H(+). The enzyme catalyses 5,6-dihydrouridine(20a) in tRNA + NAD(+) = uridine(20a) in tRNA + NADH + H(+). Catalyzes the synthesis of 5,6-dihydrouridine (D), a modified base found in the D-loop of most tRNAs, via the reduction of the C5-C6 double bond in target uridines. Specifically modifies U20 and U20a in tRNAs. The protein is tRNA-dihydrouridine(20/20a) synthase of Xylella fastidiosa (strain 9a5c).